Consider the following 415-residue polypeptide: SVF1-like protein YDR222W (415 aa).

It belongs to the SVF1 family.

The protein resides in the cytoplasm. In Saccharomyces cerevisiae (strain ATCC 204508 / S288c) (Baker's yeast), this protein is SVF1-like protein YDR222W.